The primary structure comprises 104 residues: Circadian clock oscillator protein KaiB (104 aa).

Belongs to the KaiB family. The KaiABC complex composition changes during the circadian cycle to control KaiC phosphorylation. Complexes KaiC(6), KaiA(2-4):KaiC(6), KaiB(6):KaiC(6) and KaiC(6):KaiB(6):KaiA(12) are among the most important forms, many form cooperatively. Undergoes a major conformational rearrangment; in the free state forms homotetramers as a dimer of dimers. When bound to the CI domain of KaiC switches to a monomeric thioredoxin-fold (KaiB(fs)). KaiB(fs) binds CikA, leading it to dephosphorylate phospho-RpaA.

Functionally, key component of the KaiABC oscillator complex, which constitutes the main circadian regulator in cyanobacteria. Complex composition changes during the circadian cycle to control KaiC phosphorylation. KaiA stimulates KaiC autophosphorylation, while KaiB sequesters KaiA, leading to KaiC autodephosphorylation. Phospho-Ser-431 KaiC accumulation triggers binding of KaiB to form the KaiB(6):KaiC(6) complex, leading to changes in output regulators CikA and SasA. KaiB switches to a thioredoxin-like fold (KaiB(fs)) when bound to KaiC. KaiB(6):KaiC(6) formation exposes a site for KaiA binding that sequesters KaiA from KaiC, making the KaiC(6):KaiB(6):KaiA(12) complex that results in KaiC autodephosphorylation. In terms of biological role, a metamorphic protein which reversibly switches between an inactive tetrameric fold and a rare, thioredoxin-like monomeric fold (KaiB(fs)). KaiB(fs) binds phospho-KaiC, KaiA and CikA. KaiA and CikA compete for binding to KaiB(fs), and KaiB(fs) and SasA compete for binding to KaiC, thus the clock oscillator and output signal pathway are tightly coupled. In Trichodesmium erythraeum (strain IMS101), this protein is Circadian clock oscillator protein KaiB.